A 721-amino-acid chain; its full sequence is Polyribonucleotide nucleotidyltransferase (721 aa).

Residues Asp495 and Asp501 each contribute to the Mg(2+) site. The KH domain occupies 562–621 (PRITTIKIRPERIKDIIGPGGKTIKDITARTGTSINIEDDGSVSIASPNQDKVEEAIKMI). Residues 631 to 699 (GRIYLGTVRK…RSGKIRLSRK (69 aa)) form the S1 motif domain. The interval 699 to 721 (KEALADSAKKSEGTEPPKGEPAK) is disordered.

The protein belongs to the polyribonucleotide nucleotidyltransferase family. Requires Mg(2+) as cofactor.

The protein resides in the cytoplasm. It catalyses the reaction RNA(n+1) + phosphate = RNA(n) + a ribonucleoside 5'-diphosphate. Functionally, involved in mRNA degradation. Catalyzes the phosphorolysis of single-stranded polyribonucleotides processively in the 3'- to 5'-direction. The polypeptide is Polyribonucleotide nucleotidyltransferase (Anaeromyxobacter dehalogenans (strain 2CP-1 / ATCC BAA-258)).